We begin with the raw amino-acid sequence, 315 residues long: MENVYDIAIIGSGPAGLAAALYGARAKMKTLLLEGMKVGGQIVITHEVANYPGSVPEATGPSLIGRMEEQVEEFGAERVMDNIVDVDFTDKIKVLKGAKGEYKAKAVIVATGASPKLAGCPGEKELTGKGVSYCATCDADFFEDMEVFVIGGGDTAVEEAMFLTKFARKVTIVHRRAELRAAKSIQEKAFKNEKLNFMWNTVIEEIKGDGIVESAVFKNRETGEVTEFVAPEEDGTFGIFVFIGYDPKSALVEGKLELDETGYIPTDDNMKTNVEGVFAAGDIRVKSLRQVVTATADGAIAAVQAEKYIEELFAE.

FAD is bound at residue 34 to 41 (EGMKVGGQ). The cysteines at positions 134 and 137 are disulfide-linked. 282–291 (DIRVKSLRQV) serves as a coordination point for FAD.

The protein belongs to the class-II pyridine nucleotide-disulfide oxidoreductase family. Homodimer. FAD serves as cofactor.

The protein resides in the cytoplasm. It catalyses the reaction [thioredoxin]-dithiol + NADP(+) = [thioredoxin]-disulfide + NADPH + H(+). The polypeptide is Thioredoxin reductase (trxB) (Peptoclostridium litorale (Clostridium litorale)).